The chain runs to 482 residues: Solute carrier family 49 member A3 (482 aa).

Transmembrane regions (helical) follow at residues 41–61, 81–101, 109–129, 150–170, 181–201, 206–226, 264–284, 296–316, 330–350, 355–375, 390–410, and 437–457; these read WFVL…WISF, YLSL…SWLI, AIVF…GAIV, LCAI…SVWF, IASM…PSVV, YIAH…ILAT, VILM…SSFL, LFAG…AFVC, VKTC…VINF, VLVA…SPVG, SSTG…MILF, and TSML…IIFF.

It belongs to the major facilitator superfamily.

The protein localises to the membrane. This is Solute carrier family 49 member A3 (slc49a3) from Xenopus tropicalis (Western clawed frog).